The primary structure comprises 598 residues: Polypeptide N-acetylgalactosaminyltransferase 17 (598 aa).

The Cytoplasmic portion of the chain corresponds to 1 to 6 (MASLRR). Residues 7 to 27 (VKVLLVLNLIAVAGFVLFLAK) form a helical; Signal-anchor for type II membrane protein membrane-spanning segment. Topologically, residues 28–598 (CRPIAVRSGD…QRWTIKNSIK (571 aa)) are lumenal. Residue asparagine 50 is glycosylated (N-linked (GlcNAc...) asparagine). Cystine bridges form between cysteine 142–cysteine 373 and cysteine 364–cysteine 443. Residues 151 to 262 (LPQISIIFIF…AGWAEPVLSR (112 aa)) form a catalytic subdomain A region. Substrate contacts are provided by aspartate 192 and arginine 223. Mn(2+)-binding residues include aspartate 246, histidine 248, and histidine 378. The catalytic subdomain B stretch occupies residues 319-381 (PIRTPAMIGC…PCSRVAHIER (63 aa)). 2 residues coordinate substrate: arginine 381 and tyrosine 386. 2 N-linked (GlcNAc...) asparagine glycosylation sites follow: asparagine 461 and asparagine 486. A Ricin B-type lectin domain is found at 465–594 (AYGELRNNKA…SCTGQRWTIK (130 aa)). Intrachain disulfides connect cysteine 478-cysteine 494, cysteine 526-cysteine 541, and cysteine 568-cysteine 586.

This sequence belongs to the glycosyltransferase 2 family. GalNAc-T subfamily. It depends on Mn(2+) as a cofactor. Highly expressed in brain and heart. Weakly expressed in kidney, liver, lung and spleen.

It localises to the golgi apparatus membrane. The catalysed reaction is L-seryl-[protein] + UDP-N-acetyl-alpha-D-galactosamine = a 3-O-[N-acetyl-alpha-D-galactosaminyl]-L-seryl-[protein] + UDP + H(+). The enzyme catalyses L-threonyl-[protein] + UDP-N-acetyl-alpha-D-galactosamine = a 3-O-[N-acetyl-alpha-D-galactosaminyl]-L-threonyl-[protein] + UDP + H(+). Its pathway is protein modification; protein glycosylation. May catalyze the initial reaction in O-linked oligosaccharide biosynthesis, the transfer of an N-acetyl-D-galactosamine residue to a serine or threonine residue on the protein receptor. The sequence is that of Polypeptide N-acetylgalactosaminyltransferase 17 from Homo sapiens (Human).